The primary structure comprises 83 residues: MSVRLAPDGTYVYGQPMLAPNGTYVGGGAPRLAPDGTYVGGVPRLAPNGSYVAGRPTLAPDGTYVGGRYHLAPDGTYVGDGSE.

This is an uncharacterized protein from Escherichia phage 186 (Bacteriophage 186).